Here is a 438-residue protein sequence, read N- to C-terminus: Phosphatidylcholine-sterol acyltransferase (438 aa).

The N-terminal stretch at 1–24 (MGLPGSPWQRVLLLLGLLLPPATP) is a signal peptide. Asparagine 44 carries an N-linked (GlcNAc...) asparagine glycan. A disulfide bridge connects residues cysteine 74 and cysteine 98. A glycan (N-linked (GlcNAc...) asparagine) is linked at asparagine 108. The Nucleophile role is filled by serine 205. The N-linked (GlcNAc...) asparagine glycan is linked to asparagine 296. Cysteine 337 and cysteine 380 are joined by a disulfide. Aspartate 369 acts as the Charge relay system in catalysis. N-linked (GlcNAc...) asparagine glycosylation is present at asparagine 397. Histidine 401 (charge relay system) is an active-site residue. The N-linked (GlcNAc...) asparagine glycan is linked to asparagine 408.

The protein belongs to the AB hydrolase superfamily. Lipase family. Detected in blood plasma. Produced and secreted by astrocytes (at protein level). Abundantly expressed in liver, brain and testis with highest levels in liver. In the brain, found in cerebellum, cerebral cortex, hippocampus and brain stem. Located to neurons and neuroglia.

The protein resides in the secreted. The enzyme catalyses a sterol + a 1,2-diacyl-sn-glycero-3-phosphocholine = a sterol ester + a 1-acyl-sn-glycero-3-phosphocholine. It carries out the reaction a 1-O-alkyl-2-acetyl-sn-glycero-3-phosphocholine + H2O = a 1-O-alkyl-sn-glycero-3-phosphocholine + acetate + H(+). It catalyses the reaction a 1-hexadecanoyl-2-acyl-sn-glycero-3-phosphocholine + (24S)-hydroxycholesterol = (24S)-24-hydroxycholesterol ester + 1-hexadecanoyl-sn-glycero-3-phosphocholine. The catalysed reaction is (24S)-hydroxycholesterol + 1-hexadecanoyl-2-(9Z,12Z-octadecadienoyl)-sn-glycero-3-phosphocholine = (24S)-hydroxycholesterol 3-linoleoate + 1-hexadecanoyl-sn-glycero-3-phosphocholine. The enzyme catalyses 1-hexadecanoyl-2-(5Z,8Z,11Z,14Z-eicosatetraenoyl)-sn-glycero-3-phosphocholine + cholesterol = cholesteryl (5Z,8Z,11Z,14Z)-eicosatetraenoate + 1-hexadecanoyl-sn-glycero-3-phosphocholine. It carries out the reaction 1-hexadecanoyl-2-(9Z-octadecenoyl)-sn-glycero-3-phosphocholine + cholesterol = cholesteryl (9Z-octadecenoate) + 1-hexadecanoyl-sn-glycero-3-phosphocholine. It catalyses the reaction 1-hexadecanoyl-2-(8Z,11Z,14Z-eicosatrienoyl)-sn-glycero-3-phosphocholine + cholesterol = cholesteryl (8Z,11Z,14Z)-eicosatrienoate + 1-hexadecanoyl-sn-glycero-3-phosphocholine. The catalysed reaction is 1-hexadecanoyl-2-(5Z,8Z,11Z-eicosatrienoyl)-sn-glycero-3-phosphocholine + cholesterol = cholesteryl (5Z,8Z,11Z)-eicosatrienoate + 1-hexadecanoyl-sn-glycero-3-phosphocholine. The enzyme catalyses 1-hexadecanoyl-2-(5Z,8Z,11Z,14Z,17Z-eicosapentaenoyl)-sn-glycero-3-phosphocholine + cholesterol = (5Z,8Z,11Z,14Z,17Z-eicosapentaenoyl)-cholesterol + 1-hexadecanoyl-sn-glycero-3-phosphocholine. It carries out the reaction 1-hexadecanoyl-2-(9Z,12Z-octadecadienoyl)-sn-glycero-3-phosphocholine + cholesterol = cholesteryl (9Z,12Z)-octadecadienoate + 1-hexadecanoyl-sn-glycero-3-phosphocholine. It catalyses the reaction 1-hexadecanoyl-2-(6Z,9Z,12Z-octadecatrienoyl)-sn-glycero-3-phosphocholine + cholesterol = (6Z,9Z,12Z-octadecatrienoyl)-cholesterol + 1-hexadecanoyl-sn-glycero-3-phosphocholine. The catalysed reaction is 1-hexadecanoyl-2-(11Z,14Z,17Z-eicosatrienoyl)-sn-glycero-3-phosphocholine + cholesterol = (11Z,14Z,17Z-eicosatrienoyl)-cholesterol + 1-hexadecanoyl-sn-glycero-3-phosphocholine. The enzyme catalyses 1-hexadecanoyl-2-(9Z,12Z,15Z-octadecatrienoyl)-sn-glycero-3-phosphocholine + cholesterol = (9Z,12Z,15Z-octadecatrienoyl)-cholesterol + 1-hexadecanoyl-sn-glycero-3-phosphocholine. It carries out the reaction 1-hexadecanoyl-2-(9Z,12Z-octadecadienoyl)-sn-glycero-3-phosphocholine + H2O = (9Z,12Z)-octadecadienoate + 1-hexadecanoyl-sn-glycero-3-phosphocholine + H(+). It catalyses the reaction 1-hexadecanoyl-2-(5Z,8Z,11Z,14Z-eicosatetraenoyl)-sn-glycero-3-phosphocholine + H2O = 1-hexadecanoyl-sn-glycero-3-phosphocholine + (5Z,8Z,11Z,14Z)-eicosatetraenoate + H(+). The catalysed reaction is a 1-O-alkyl-2-acetyl-sn-glycero-3-phosphocholine + 1-hexadecanoyl-sn-glycero-3-phosphocholine = 1-hexadecanoyl-2-acetyl-sn-glycero-3-phosphocholine + a 1-O-alkyl-sn-glycero-3-phosphocholine. With respect to regulation, APOA1 is the most potent activator in plasma. Also activated by APOE, APOC1 and APOA4. In terms of biological role, central enzyme in the extracellular metabolism of plasma lipoproteins. Synthesized mainly in the liver and secreted into plasma where it converts cholesterol and phosphatidylcholines (lecithins) to cholesteryl esters and lysophosphatidylcholines on the surface of high and low density lipoproteins (HDLs and LDLs). The cholesterol ester is then transported back to the liver. Also produced in the brain by primary astrocytes, and esterifies free cholesterol on nascent APOE-containing lipoproteins secreted from glia and influences cerebral spinal fluid (CSF) APOE- and APOA1 levels. Together with APOE and the cholesterol transporter ABCA1, plays a key role in the maturation of glial-derived, nascent lipoproteins. Required for remodeling high-density lipoprotein particles into their spherical forms. Has a preference for plasma 16:0-18:2 or 18:O-18:2 phosphatidylcholines. Catalyzes the hydrolysis of 1-O-alkyl-2-acetyl-sn-glycero-3-phosphocholine (platelet-activating factor or PAF) to 1-O-alkyl-sn-glycero-3-phosphocholine (lyso-PAF). Also catalyzes the transfer of the acetate group from PAF to 1-hexadecanoyl-sn-glycero-3-phosphocholine forming lyso-PAF. Catalyzes the esterification of (24S)-hydroxycholesterol (24(S)OH-C), also known as cerebrosterol to produce 24(S)OH-C monoesters. This Mus musculus (Mouse) protein is Phosphatidylcholine-sterol acyltransferase (Lcat).